A 267-amino-acid chain; its full sequence is Type II pantothenate kinase (267 aa).

ATP is bound at residue 6-13 (DAGGTLIK). The active-site Proton acceptor is the glutamate 70. ATP-binding positions include threonine 99, 121 to 125 (GGMIQ), tyrosine 137, and serine 225.

Belongs to the type II pantothenate kinase family. Homodimer.

It localises to the cytoplasm. The catalysed reaction is (R)-pantothenate + ATP = (R)-4'-phosphopantothenate + ADP + H(+). It participates in cofactor biosynthesis; coenzyme A biosynthesis; CoA from (R)-pantothenate: step 1/5. Functionally, catalyzes the phosphorylation of pantothenate (Pan), the first step in CoA biosynthesis. This is Type II pantothenate kinase from Staphylococcus aureus (strain Mu50 / ATCC 700699).